The chain runs to 263 residues: MRSSSDPASIHVVIPARFGSTRLPGKPLIDLAGEPMIVRVYEAVRAALPETVNIVVATDDERIVGSLEAYRIPVRMTDPEHQSGTDRCAQVARELGWNSDDLVVNVQGDEPLVPQPLLASFVQFCANAQAFDMATVAVPLTEVSHLTDPNVVKLVVGAQGQAIVFSRSAIPFCRDLPQNEWPLSAYLRHVGIYAYRCSALYRLTETPSCELEELERLEQMRAIWLGMPIRVFEWPEPPPPGVDTKEDVARVREILFVNASGRS.

It belongs to the KdsB family.

It is found in the cytoplasm. The catalysed reaction is 3-deoxy-alpha-D-manno-oct-2-ulosonate + CTP = CMP-3-deoxy-beta-D-manno-octulosonate + diphosphate. It participates in nucleotide-sugar biosynthesis; CMP-3-deoxy-D-manno-octulosonate biosynthesis; CMP-3-deoxy-D-manno-octulosonate from 3-deoxy-D-manno-octulosonate and CTP: step 1/1. Its pathway is bacterial outer membrane biogenesis; lipopolysaccharide biosynthesis. Its function is as follows. Activates KDO (a required 8-carbon sugar) for incorporation into bacterial lipopolysaccharide in Gram-negative bacteria. The protein is 3-deoxy-manno-octulosonate cytidylyltransferase 2 of Paraburkholderia phytofirmans (strain DSM 17436 / LMG 22146 / PsJN) (Burkholderia phytofirmans).